We begin with the raw amino-acid sequence, 885 residues long: 3-hydroxy-3-methylglutaryl-coenzyme A reductase (885 aa).

Over Met1 to His9 the chain is Cytoplasmic. Residues Gly10–Gly39 form a helical membrane-spanning segment. The Lumenal segment spans residues Asn40–Asp56. A helical transmembrane segment spans residues Val57 to Phe78. Residues Asp61–Leu218 form the SSD domain. An INSIG-binding motif motif is present at residues Tyr75 to Phe78. Over Gln79–Lys89 the chain is Cytoplasmic. Lys89 participates in a covalent cross-link: Glycyl lysine isopeptide (Lys-Gly) (interchain with G-Cter in ubiquitin). Residues Tyr90 to Leu114 traverse the membrane as a helical segment. Residues Asp115–Glu123 lie on the Lumenal side of the membrane. Residues Ala124–Ser149 traverse the membrane as a helical segment. The Cytoplasmic segment spans residues Gln150–Arg159. Residues Gly160–Val187 form a helical membrane-spanning segment. The Lumenal segment spans residues Arg188–Glu191. Residues Ile192–Leu220 traverse the membrane as a helical segment. Topologically, residues Glu221–Lys248 are cytoplasmic. Residue Lys248 forms a Glycyl lysine isopeptide (Lys-Gly) (interchain with G-Cter in ubiquitin) linkage. The helical transmembrane segment at Pro249–Ala275 threads the bilayer. Residues Asp276 to Lys314 lie on the Lumenal side of the membrane. Residues Asn281 and Asn296 are each glycosylated (N-linked (GlcNAc...) asparagine). A helical transmembrane segment spans residues Met315 to Phe339. The Cytoplasmic portion of the chain corresponds to Glu340 to Ala885. Residues Glu558, Lys688, and Asp764 each act as charge relay system in the active site. The active-site Proton donor is His863. Ser869 carries the post-translational modification Phosphoserine; by AMPK.

The protein belongs to the HMG-CoA reductase family. As to quaternary structure, homotetramer. Homodimer. Interacts (via its SSD) with INSIG1; the interaction, accelerated by sterols, leads to the recruitment of HMGCR to AMFR/gp78 for its ubiquitination by the sterol-mediated ERAD pathway. Interacts with UBIAD1. Undergoes sterol-mediated ubiquitination and ER-associated degradation (ERAD). Accumulation of sterols in the endoplasmic reticulum (ER) membrane, triggers binding of the reductase to the ER membrane protein INSIG1 or INSIG2. The INSIG1 binding leads to the recruitment of the ubiquitin ligase, AMFR/gp78, RNF139 or RNF145, initiating ubiquitination of the reductase. The ubiquitinated reductase is then extracted from the ER membrane and delivered to cytosolic 26S proteosomes by a mechanism probably mediated by the ATPase Valosin-containing protein VCP/p97. The INSIG2-binding leads to the recruitment of the ubiquitin ligase RNF139, initiating ubiquitination of the reductase. Lys-248 is the main site of ubiquitination. Ubiquitination is enhanced by the presence of a geranylgeranylated protein. Post-translationally, N-glycosylated. Deglycosylated by NGLY1 on release from the endoplasmic reticulum (ER) in a sterol-mediated manner. In terms of processing, phosphorylated. Phosphorylation at Ser-869 reduces the catalytic activity. As to expression, high expression found in liver, heart, kidney, bladder and subcutaneous fat. Lower levels in lung, uterus and large intestine. Lowest levels in cerebrum, spleen, spinal cord, stomach, ovary, longissimus muscle, and small intestine.

It is found in the endoplasmic reticulum membrane. The protein localises to the peroxisome membrane. It catalyses the reaction (R)-mevalonate + 2 NADP(+) + CoA = (3S)-3-hydroxy-3-methylglutaryl-CoA + 2 NADPH + 2 H(+). Its pathway is metabolic intermediate biosynthesis; (R)-mevalonate biosynthesis; (R)-mevalonate from acetyl-CoA: step 3/3. Its activity is regulated as follows. Regulated by a negative feedback mechanism through sterols and non-sterol metabolites derived from mevalonate. Phosphorylation at Ser-869 down-regulates the catalytic activity. Catalyzes the conversion of (3S)-hydroxy-3-methylglutaryl-CoA (HMG-CoA) to mevalonic acid, the rate-limiting step in the synthesis of cholesterol and other isoprenoids, thus plays a critical role in cellular cholesterol homeostasis. This Sus scrofa (Pig) protein is 3-hydroxy-3-methylglutaryl-coenzyme A reductase (HMGCR).